Consider the following 721-residue polypeptide: Polyribonucleotide nucleotidyltransferase (721 aa).

Mg(2+)-binding residues include Asp495 and Asp501. The 60-residue stretch at Pro562–Ile621 folds into the KH domain. Positions Gly631 to Lys699 constitute an S1 motif domain. Positions Lys699–Lys721 are disordered.

The protein belongs to the polyribonucleotide nucleotidyltransferase family. Mg(2+) is required as a cofactor.

The protein resides in the cytoplasm. The enzyme catalyses RNA(n+1) + phosphate = RNA(n) + a ribonucleoside 5'-diphosphate. Involved in mRNA degradation. Catalyzes the phosphorolysis of single-stranded polyribonucleotides processively in the 3'- to 5'-direction. In Anaeromyxobacter sp. (strain K), this protein is Polyribonucleotide nucleotidyltransferase.